A 225-amino-acid polypeptide reads, in one-letter code: Thymidylate kinase (225 aa).

9 to 16 (GIEGCGKT) is a binding site for ATP.

This sequence belongs to the thymidylate kinase family.

It catalyses the reaction dTMP + ATP = dTDP + ADP. In terms of biological role, phosphorylation of dTMP to form dTDP in both de novo and salvage pathways of dTTP synthesis. In Citrifermentans bemidjiense (strain ATCC BAA-1014 / DSM 16622 / JCM 12645 / Bem) (Geobacter bemidjiensis), this protein is Thymidylate kinase.